A 203-amino-acid chain; its full sequence is Small ribosomal subunit protein uS4 (203 aa).

Residues 20–45 are disordered; sequence LPGLTRKRPKNTNPPGMHGAERKKKS. The S4 RNA-binding domain occupies 92–155; it reads MRLDCIVFRL…SSRKLVAAYA (64 aa).

It belongs to the universal ribosomal protein uS4 family. Part of the 30S ribosomal subunit. Contacts protein S5. The interaction surface between S4 and S5 is involved in control of translational fidelity.

One of the primary rRNA binding proteins, it binds directly to 16S rRNA where it nucleates assembly of the body of the 30S subunit. Its function is as follows. With S5 and S12 plays an important role in translational accuracy. This chain is Small ribosomal subunit protein uS4, found in Synechococcus sp. (strain JA-3-3Ab) (Cyanobacteria bacterium Yellowstone A-Prime).